Here is a 440-residue protein sequence, read N- to C-terminus: Gap junction alpha-8 protein (440 aa).

An intramembrane segment occupies 2–12; sequence GDWSFLGNILE. At 13–21 the chain is on the cytoplasmic side; sequence EVNEHSTVI. A helical membrane pass occupies residues 22 to 42; sequence GRVWLTVLFIFRILILGTAAE. Residues 43 to 71 are Extracellular-facing; sequence FVWGDEQSDFVCNTQQPGCENVCYDEAFP. 3 cysteine pairs are disulfide-bonded: Cys-54-Cys-201, Cys-61-Cys-195, and Cys-65-Cys-190. The helical transmembrane segment at 72-92 threads the bilayer; that stretch reads ISHIRLWVLQIIFVSTPSLMY. Topologically, residues 93–161 are cytoplasmic; it reads VGHAVHHVRM…GTLLRTYVCH (69 aa). Residues 111–143 form a disordered region; the sequence is AEELCQQSRSNGGERVPIAPDQASIRKSSSSSK. A helical membrane pass occupies residues 162–182; that stretch reads IIFKTLFEVGFIVGHYFLYGF. Topologically, residues 183-210 are extracellular; that stretch reads RILPLYRCSRWPCPNVVDCFVSRPTEKT. Residues 211 to 231 form a helical membrane-spanning segment; sequence IFILFMLSVAFVSLFLNIMEM. Residues 232–440 are Cytoplasmic-facing; the sequence is SHLGMKGIRS…SRARSDDLTI (209 aa). The segment at 334–440 is disordered; sequence GAQEVEREEQ…SRARSDDLTI (107 aa). Composition is skewed to basic and acidic residues over residues 353 to 364 and 375 to 399; these read VGEKKQEAEKVA and DGEK…EKVT. Residues 423–432 show a composition bias toward low complexity; sequence LSRLSKASSR.

Belongs to the connexin family. Alpha-type (group II) subfamily. A hemichannel or connexon is composed of a hexamer of connexins. A functional gap junction is formed by the apposition of two hemichannels. Forms heteromeric channels with GJA3. In terms of tissue distribution, detected in eye lens (at protein level).

The protein resides in the cell membrane. It localises to the cell junction. It is found in the gap junction. Its function is as follows. Structural component of eye lens gap junctions. Gap junctions are dodecameric channels that connect the cytoplasm of adjoining cells. They are formed by the docking of two hexameric hemichannels, one from each cell membrane. Small molecules and ions diffuse from one cell to a neighboring cell via the central pore. The polypeptide is Gap junction alpha-8 protein (Gja8) (Rattus norvegicus (Rat)).